The chain runs to 253 residues: Triosephosphate isomerase (253 aa).

Residue 8–10 coordinates substrate; sequence NWK. The active-site Electrophile is His93. Residue Glu165 is the Proton acceptor of the active site. Residues Gly171, Ser210, and 231-232 each bind substrate; that span reads GG.

This sequence belongs to the triosephosphate isomerase family. As to quaternary structure, homodimer.

It is found in the cytoplasm. It carries out the reaction D-glyceraldehyde 3-phosphate = dihydroxyacetone phosphate. Its pathway is carbohydrate biosynthesis; gluconeogenesis. It functions in the pathway carbohydrate degradation; glycolysis; D-glyceraldehyde 3-phosphate from glycerone phosphate: step 1/1. Functionally, involved in the gluconeogenesis. Catalyzes stereospecifically the conversion of dihydroxyacetone phosphate (DHAP) to D-glyceraldehyde-3-phosphate (G3P). This chain is Triosephosphate isomerase, found in Francisella philomiragia subsp. philomiragia (strain ATCC 25017 / CCUG 19701 / FSC 153 / O#319-036).